A 126-amino-acid polypeptide reads, in one-letter code: MNFPQNVKYTNEHEWIRLEGDVAYVGITDYAQEQLGDIVFVDIPTEGETLEAEEVFGTIEVVKTISDLFLPVAGEVVEQNPALEENPELVNKDPYGEGWLIKMKPANAADLDNLLDAEGYKAVVNA.

One can recognise a Lipoyl-binding domain in the interval 22–104; it reads VAYVGITDYA…YGEGWLIKMK (83 aa). At lysine 63 the chain carries N6-lipoyllysine.

The protein belongs to the GcvH family. As to quaternary structure, the glycine cleavage system is composed of four proteins: P, T, L and H. (R)-lipoate serves as cofactor.

Functionally, the glycine cleavage system catalyzes the degradation of glycine. The H protein shuttles the methylamine group of glycine from the P protein to the T protein. The protein is Glycine cleavage system H protein of Bacteroides fragilis (strain YCH46).